The chain runs to 453 residues: Bifunctional protein GlmU (453 aa).

The pyrophosphorylase stretch occupies residues 1–226 (MSLNVVILAA…AMEVEGANNR (226 aa)). Residues 8–11 (LAAG), Lys22, Gln73, 78–79 (GT), 100–102 (YGD), Gly137, Glu151, Asn166, and Asn224 contribute to the UDP-N-acetyl-alpha-D-glucosamine site. Mg(2+) is bound at residue Asp102. Mg(2+) is bound at residue Asn224. The tract at residues 227-247 (VQLAQLERSYQKMQAERLMIA) is linker. Positions 248-453 (GATLIDPARF…QNWARPVKKK (206 aa)) are N-acetyltransferase. Residues Arg330 and Lys348 each contribute to the UDP-N-acetyl-alpha-D-glucosamine site. Catalysis depends on His360, which acts as the Proton acceptor. Tyr363 and Asn374 together coordinate UDP-N-acetyl-alpha-D-glucosamine. Residues Ala377, 383-384 (NY), Ser402, Ala420, and Arg437 each bind acetyl-CoA.

The protein in the N-terminal section; belongs to the N-acetylglucosamine-1-phosphate uridyltransferase family. It in the C-terminal section; belongs to the transferase hexapeptide repeat family. In terms of assembly, homotrimer. The cofactor is Mg(2+).

It localises to the cytoplasm. It carries out the reaction alpha-D-glucosamine 1-phosphate + acetyl-CoA = N-acetyl-alpha-D-glucosamine 1-phosphate + CoA + H(+). The catalysed reaction is N-acetyl-alpha-D-glucosamine 1-phosphate + UTP + H(+) = UDP-N-acetyl-alpha-D-glucosamine + diphosphate. Its pathway is nucleotide-sugar biosynthesis; UDP-N-acetyl-alpha-D-glucosamine biosynthesis; N-acetyl-alpha-D-glucosamine 1-phosphate from alpha-D-glucosamine 6-phosphate (route II): step 2/2. It participates in nucleotide-sugar biosynthesis; UDP-N-acetyl-alpha-D-glucosamine biosynthesis; UDP-N-acetyl-alpha-D-glucosamine from N-acetyl-alpha-D-glucosamine 1-phosphate: step 1/1. The protein operates within bacterial outer membrane biogenesis; LPS lipid A biosynthesis. Its function is as follows. Catalyzes the last two sequential reactions in the de novo biosynthetic pathway for UDP-N-acetylglucosamine (UDP-GlcNAc). The C-terminal domain catalyzes the transfer of acetyl group from acetyl coenzyme A to glucosamine-1-phosphate (GlcN-1-P) to produce N-acetylglucosamine-1-phosphate (GlcNAc-1-P), which is converted into UDP-GlcNAc by the transfer of uridine 5-monophosphate (from uridine 5-triphosphate), a reaction catalyzed by the N-terminal domain. This is Bifunctional protein GlmU from Aeromonas hydrophila subsp. hydrophila (strain ATCC 7966 / DSM 30187 / BCRC 13018 / CCUG 14551 / JCM 1027 / KCTC 2358 / NCIMB 9240 / NCTC 8049).